We begin with the raw amino-acid sequence, 469 residues long: 3-isopropylmalate dehydratase large subunit (469 aa).

3 residues coordinate [4Fe-4S] cluster: Cys347, Cys407, and Cys410.

Belongs to the aconitase/IPM isomerase family. LeuC type 1 subfamily. Heterodimer of LeuC and LeuD. It depends on [4Fe-4S] cluster as a cofactor.

The enzyme catalyses (2R,3S)-3-isopropylmalate = (2S)-2-isopropylmalate. It functions in the pathway amino-acid biosynthesis; L-leucine biosynthesis; L-leucine from 3-methyl-2-oxobutanoate: step 2/4. In terms of biological role, catalyzes the isomerization between 2-isopropylmalate and 3-isopropylmalate, via the formation of 2-isopropylmaleate. The polypeptide is 3-isopropylmalate dehydratase large subunit (Photorhabdus laumondii subsp. laumondii (strain DSM 15139 / CIP 105565 / TT01) (Photorhabdus luminescens subsp. laumondii)).